Here is a 197-residue protein sequence, read N- to C-terminus: Large ribosomal subunit protein eL15 (197 aa).

The segment at 175 to 197 (LRTGRKGSSKSRPSIRANGRLRR) is disordered.

The protein belongs to the eukaryotic ribosomal protein eL15 family.

The chain is Large ribosomal subunit protein eL15 (rpl15e) from Thermoplasma volcanium (strain ATCC 51530 / DSM 4299 / JCM 9571 / NBRC 15438 / GSS1).